The sequence spans 238 residues: Uridylate kinase (238 aa).

12–15 (KLSG) contributes to the ATP binding site. Gly-54 is a binding site for UMP. ATP contacts are provided by Gly-55 and Arg-59. UMP is bound by residues Asp-74 and 135 to 142 (TGNPYFTT). Residues Thr-162, Asn-163, Tyr-168, and Asp-171 each coordinate ATP.

It belongs to the UMP kinase family. In terms of assembly, homohexamer.

The protein localises to the cytoplasm. It catalyses the reaction UMP + ATP = UDP + ADP. It functions in the pathway pyrimidine metabolism; CTP biosynthesis via de novo pathway; UDP from UMP (UMPK route): step 1/1. Its activity is regulated as follows. Inhibited by UTP. Functionally, catalyzes the reversible phosphorylation of UMP to UDP. The chain is Uridylate kinase from Nitrobacter hamburgensis (strain DSM 10229 / NCIMB 13809 / X14).